We begin with the raw amino-acid sequence, 45 residues long: Alpha-conotoxin-like Lp1.10 (45 aa).

A propeptide spanning residues 1–27 is cleaved from the precursor; that stretch reads VVLGPASDGRNAAANVKAPDLIALTVR. Intrachain disulfides connect Cys-30/Cys-36 and Cys-31/Cys-44. Residues 32-34 form a lacks the Ser-Xaa-Pro motif that is crucial for potent interaction with nAChR region; sequence HNA. Residue Cys-44 is modified to Cysteine amide.

Belongs to the conotoxin A superfamily. Expressed by the venom duct.

The protein localises to the secreted. Its function is as follows. Alpha-conotoxins act on postsynaptic membranes, they bind to the nicotinic acetylcholine receptors (nAChR) and thus inhibit them. Has possibly a distinct nAChR binding mode from other alpha-conotoxins, due to a different three residue motif (lacks the Ser-Xaa-Pro motif). The chain is Alpha-conotoxin-like Lp1.10 from Conus leopardus (Leopard cone).